Reading from the N-terminus, the 282-residue chain is Stage 0 sporulation protein J (282 aa).

Residues 139–158 constitute a DNA-binding region (H-T-H motif); that stretch reads EQLAKRLGKSRPHIANHLRL.

The protein belongs to the ParB family.

It is found in the cytoplasm. It localises to the nucleoid. Functionally, required for the initiation of sporulation and for normal chromosome segregation. Antagonizes sporulation inhibition by Soj. It probably interacts with a specific DNA site and other proteins involved in partitioning and cell division, and antagonizes Soj in response to cell cycle events related to chromosome partitioning. The protein is Stage 0 sporulation protein J of Bacillus subtilis (strain 168).